The chain runs to 360 residues: Protein Wnt-2 (360 aa).

Residues 1–26 form the signal peptide; that stretch reads MNSSSLFGIWLSVPLILSWVTPQVSS. Cystine bridges form between Cys76-Cys87, Cys127-Cys135, Cys137-Cys157, Cys206-Cys220, Cys208-Cys215, Cys278-Cys309, Cys294-Cys304, Cys308-Cys348, Cys324-Cys339, Cys326-Cys336, and Cys331-Cys332. A lipid anchor (O-palmitoleoyl serine; by PORCN) is attached at Ser212. Asn295 is a glycosylation site (N-linked (GlcNAc...) asparagine).

This sequence belongs to the Wnt family. Palmitoleoylation is required for efficient binding to frizzled receptors. Depalmitoleoylation leads to Wnt signaling pathway inhibition.

It localises to the secreted. The protein localises to the extracellular space. It is found in the extracellular matrix. Functionally, ligand for members of the frizzled family of seven transmembrane receptors. Functions in the canonical Wnt signaling pathway that results in activation of transcription factors of the TCF/LEF family. Functions as a upstream regulator of FGF10 expression. Plays an important role in embryonic lung development. May contribute to embryonic brain development by regulating the proliferation of dopaminergic precursors and neurons. In Monodelphis domestica (Gray short-tailed opossum), this protein is Protein Wnt-2 (WNT2).